A 136-amino-acid polypeptide reads, in one-letter code: uncharacterized protein (136 aa).

Disordered regions lie at residues 23–44 (QESLKSRIEDKNGDVASPKEDN) and 56–95 (DGVITSEEGCSSSGEKENSGLCSEESSEEDPEEAEEESAR). Residues 61–79 (SEEGCSSSGEKENSGLCSE) are compositionally biased toward low complexity. The span at 80–91 (ESSEEDPEEAEE) shows a compositional bias: acidic residues.

This is an uncharacterized protein from Saccharomyces cerevisiae (strain ATCC 204508 / S288c) (Baker's yeast).